The following is an 89-amino-acid chain: Small ribosomal subunit protein uS15 (89 aa).

The protein belongs to the universal ribosomal protein uS15 family. Part of the 30S ribosomal subunit. Forms a bridge to the 50S subunit in the 70S ribosome, contacting the 23S rRNA.

Its function is as follows. One of the primary rRNA binding proteins, it binds directly to 16S rRNA where it helps nucleate assembly of the platform of the 30S subunit by binding and bridging several RNA helices of the 16S rRNA. Forms an intersubunit bridge (bridge B4) with the 23S rRNA of the 50S subunit in the ribosome. This Pseudomonas putida (Arthrobacter siderocapsulatus) protein is Small ribosomal subunit protein uS15.